A 65-amino-acid polypeptide reads, in one-letter code: Neurotoxin BmK AGAP-SYPU2 (65 aa).

The region spanning K2–N64 is the LCN-type CS-alpha/beta domain. Cystine bridges form between C12–C63, C16–C36, C22–C46, and C26–C48.

As to expression, expressed by the venom gland.

The protein localises to the secreted. Its function is as follows. Alpha toxins bind voltage-independently at site-3 of sodium channels and inhibit the inactivation of the activated channels, thereby blocking neuronal transmission. In vivo, shows analgesic activity (ED(50) is 1.42 mg/kg) and antitumor activity against Ehrlich ascites tumor and S-180 fibrosarcoma models. The sequence is that of Neurotoxin BmK AGAP-SYPU2 from Olivierus martensii (Manchurian scorpion).